A 364-amino-acid polypeptide reads, in one-letter code: D-alanine--D-alanine ligase (364 aa).

One can recognise an ATP-grasp domain in the interval 140-346 (KKLALLEGIP…YSQLIDKLIS (207 aa)). 173-228 (ESEFSYPVFVKPANSGSSVGISKAKDREDLVLAIHEAFLYDTKILIEQAINAREIE) lines the ATP pocket. Asp-299, Glu-313, and Asn-315 together coordinate Mg(2+).

It belongs to the D-alanine--D-alanine ligase family. Mg(2+) is required as a cofactor. Requires Mn(2+) as cofactor.

It is found in the cytoplasm. It carries out the reaction 2 D-alanine + ATP = D-alanyl-D-alanine + ADP + phosphate + H(+). It functions in the pathway cell wall biogenesis; peptidoglycan biosynthesis. Cell wall formation. The protein is D-alanine--D-alanine ligase of Caldicellulosiruptor bescii (strain ATCC BAA-1888 / DSM 6725 / KCTC 15123 / Z-1320) (Anaerocellum thermophilum).